The chain runs to 406 residues: Phosphopentomutase (406 aa).

Mn(2+) is bound by residues D10, D305, H310, D346, H347, and H358.

This sequence belongs to the phosphopentomutase family. Requires Mn(2+) as cofactor.

The protein localises to the cytoplasm. It carries out the reaction 2-deoxy-alpha-D-ribose 1-phosphate = 2-deoxy-D-ribose 5-phosphate. The enzyme catalyses alpha-D-ribose 1-phosphate = D-ribose 5-phosphate. It participates in carbohydrate degradation; 2-deoxy-D-ribose 1-phosphate degradation; D-glyceraldehyde 3-phosphate and acetaldehyde from 2-deoxy-alpha-D-ribose 1-phosphate: step 1/2. In terms of biological role, isomerase that catalyzes the conversion of deoxy-ribose 1-phosphate (dRib-1-P) and ribose 1-phosphate (Rib-1-P) to deoxy-ribose 5-phosphate (dRib-5-P) and ribose 5-phosphate (Rib-5-P), respectively. The polypeptide is Phosphopentomutase (Vibrio cholerae serotype O1 (strain ATCC 39315 / El Tor Inaba N16961)).